Reading from the N-terminus, the 649-residue chain is Thioredoxin reductase 1, cytoplasmic (649 aa).

Met1 is modified (N-acetylmethionine). The tract at residues 1 to 49 (MGCAEGKAVAAAAPTELQTKGKNGDGRRRSAKDHHPGKTLPENPAGFTS) is disordered. Basic and acidic residues predominate over residues 22–36 (KNGDGRRRSAKDHHP). The 101-residue stretch at 56–156 (RALLQAYIDG…KLLKMNGPED (101 aa)) folds into the Glutaredoxin domain. The segment at 145–149 (LQKLL) is required for interaction with ESR1 and ESR2. FAD is bound by residues 172–173 (SG), 192–193 (DF), 208–209 (TC), and 213–217 (GCIPK). Cys209 and Cys214 form a disulfide bridge. The residue at position 218 (Lys218) is an N6-succinyllysine. Tyr281 is subject to Phosphotyrosine. FAD-binding positions include 281–282 (YG) and Thr311. Residues Arg316, 348 to 354 (ASYVALE), 371 to 372 (RS), Arg376, 376 to 378 (RGF), 442 to 443 (GR), and Lys465 each bind NADP(+). Tyr350 is an FAD binding site. FAD contacts are provided by residues Asp484, 491 to 493 (ELT), and His622. Glu491 lines the NADP(+) pocket. His622 (proton acceptor) is an active-site residue. Positions 647–648 (CU) form a cross-link, cysteinyl-selenocysteine (Cys-Sec). A non-standard amino acid (selenocysteine) is located at residue Sec648.

Belongs to the class-I pyridine nucleotide-disulfide oxidoreductase family. Homodimer. Interacts with HERC5. As to quaternary structure, interacts with ESR1 and ESR2. FAD serves as cofactor. In terms of processing, the N-terminus is blocked. ISGylated. In terms of tissue distribution, expressed predominantly in Leydig cells (at protein level). Also expressed in ovary, spleen, heart, liver, kidney and pancreas and in a number of cancer cell lines. Widely expressed with highest levels in kidney, testis, uterus, ovary, prostate, placenta and fetal liver.

It is found in the cytoplasm. The protein resides in the nucleus. It carries out the reaction [thioredoxin]-dithiol + NADP(+) = [thioredoxin]-disulfide + NADPH + H(+). The catalysed reaction is H2O2 + NADPH + H(+) = NADP(+) + 2 H2O. Its function is as follows. Reduces disulfideprotein thioredoxin (Trx) to its dithiol-containing form. Homodimeric flavoprotein involved in the regulation of cellular redox reactions, growth and differentiation. Contains a selenocysteine residue at the C-terminal active site that is essential for catalysis. Also has reductase activity on hydrogen peroxide (H2O2). In terms of biological role, induces actin and tubulin polymerization, leading to formation of cell membrane protrusions. Functionally, enhances the transcriptional activity of estrogen receptors ESR1 and ESR2. Enhances the transcriptional activity of the estrogen receptor ESR2 only. Mediates cell death induced by a combination of interferon-beta and retinoic acid. In Homo sapiens (Human), this protein is Thioredoxin reductase 1, cytoplasmic.